We begin with the raw amino-acid sequence, 65 residues long: Large ribosomal subunit protein bL35 (65 aa).

Positions 1–26 (MPKMKTHRGAAKRFRKTGTGKLKRGK) are disordered.

Belongs to the bacterial ribosomal protein bL35 family.

This chain is Large ribosomal subunit protein bL35, found in Clostridium beijerinckii (strain ATCC 51743 / NCIMB 8052) (Clostridium acetobutylicum).